The sequence spans 66 residues: DNA gyrase inhibitor YacG (66 aa).

4 residues coordinate Zn(2+): Cys-9, Cys-12, Cys-28, and Cys-32. Residues 45-66 (HKIAGAEESEDELYSGDLEPRH) are disordered.

Belongs to the DNA gyrase inhibitor YacG family. Interacts with GyrB. Requires Zn(2+) as cofactor.

Its function is as follows. Inhibits all the catalytic activities of DNA gyrase by preventing its interaction with DNA. Acts by binding directly to the C-terminal domain of GyrB, which probably disrupts DNA binding by the gyrase. The protein is DNA gyrase inhibitor YacG of Pseudomonas entomophila (strain L48).